Reading from the N-terminus, the 658-residue chain is Glycogen debranching enzyme (658 aa).

Aspartate 336 acts as the Nucleophile in catalysis. Residue glutamate 371 is the Proton donor of the active site. Residues 459 to 486 (EANGEENRDGTNSNYSDNNGKEGLGGPL) are disordered.

This sequence belongs to the glycosyl hydrolase 13 family.

It carries out the reaction Hydrolysis of (1-&gt;6)-alpha-D-glucosidic linkages to branches with degrees of polymerization of three or four glucose residues in limit dextrin.. It functions in the pathway glycan degradation; glycogen degradation. Its function is as follows. Removes maltotriose and maltotetraose chains that are attached by 1,6-alpha-linkage to the limit dextrin main chain, generating a debranched limit dextrin. This is Glycogen debranching enzyme from Salmonella gallinarum (strain 287/91 / NCTC 13346).